The sequence spans 364 residues: Fructose-1,6-bisphosphatase class 1 2 (364 aa).

Glutamate 99, aspartate 121, leucine 123, and aspartate 124 together coordinate Mg(2+). Substrate contacts are provided by residues 124 to 127 and asparagine 220; that span reads DGSS. A Mg(2+)-binding site is contributed by glutamate 292.

It belongs to the FBPase class 1 family. In terms of assembly, homotetramer. Mg(2+) is required as a cofactor.

The protein resides in the cytoplasm. It carries out the reaction beta-D-fructose 1,6-bisphosphate + H2O = beta-D-fructose 6-phosphate + phosphate. Its pathway is carbohydrate biosynthesis; gluconeogenesis. The protein is Fructose-1,6-bisphosphatase class 1 2 of Polaromonas naphthalenivorans (strain CJ2).